The primary structure comprises 202 residues: ATP-dependent Clp protease proteolytic subunit (202 aa).

Ser106 acts as the Nucleophile in catalysis. His131 is an active-site residue.

The protein belongs to the peptidase S14 family. Fourteen ClpP subunits assemble into 2 heptameric rings which stack back to back to give a disk-like structure with a central cavity, resembling the structure of eukaryotic proteasomes.

The protein resides in the cytoplasm. It carries out the reaction Hydrolysis of proteins to small peptides in the presence of ATP and magnesium. alpha-casein is the usual test substrate. In the absence of ATP, only oligopeptides shorter than five residues are hydrolyzed (such as succinyl-Leu-Tyr-|-NHMec, and Leu-Tyr-Leu-|-Tyr-Trp, in which cleavage of the -Tyr-|-Leu- and -Tyr-|-Trp bonds also occurs).. Its function is as follows. Cleaves peptides in various proteins in a process that requires ATP hydrolysis. Has a chymotrypsin-like activity. Plays a major role in the degradation of misfolded proteins. The chain is ATP-dependent Clp protease proteolytic subunit from Verminephrobacter eiseniae (strain EF01-2).